The following is a 257-amino-acid chain: UPF0246 protein BPP3440 (257 aa).

The protein belongs to the UPF0246 family.

The chain is UPF0246 protein BPP3440 from Bordetella parapertussis (strain 12822 / ATCC BAA-587 / NCTC 13253).